The primary structure comprises 459 residues: MYRENHHIHFVGIGGIGMSGIAELLLHLGYSVSGSDLRSSATTKRLQDLGATIYEGHQAASCAGASVVVTSSAVAEDNPEVVQAREDKIPVIPRAEMLAELMRLKTFGIAVAGSHGKTSTTSLIGCLLSQTGFDPTIVVGGKVDSFGGNAKLGEGDFLVAEADESDGSFLKLSPVLEVVTNIDLEHLDYYTDIEHIKETFLSFIDKIPFYGAAIVCLDDENVAAILPQVQKRLITYGLTPQADVSADNLRFAAGRSTFRVRAAGEVLGEISVFPSGTHNVYNALAAVAIGLELEIPFGKIATALASFGGVQRRMQHKGEGKGITVIDDYAHHPTEIRASLKAIKETWPEKRLVVLFQPHRYSRTQALFEEFKTCFHQADCLIMTDIYEASESPIEGVSTEILLEAIKAHGQRYTRHIPEIASLATEVMPNLREGDLVVTLGAGNIVQAGEEICQLLGQE.

113 to 119 (GSHGKTS) is an ATP binding site.

This sequence belongs to the MurCDEF family.

It is found in the cytoplasm. The enzyme catalyses UDP-N-acetyl-alpha-D-muramate + L-alanine + ATP = UDP-N-acetyl-alpha-D-muramoyl-L-alanine + ADP + phosphate + H(+). It participates in cell wall biogenesis; peptidoglycan biosynthesis. Functionally, cell wall formation. The sequence is that of UDP-N-acetylmuramate--L-alanine ligase from Desulfotalea psychrophila (strain LSv54 / DSM 12343).